The following is a 117-amino-acid chain: Large ribosomal subunit protein bL20c (117 aa).

Belongs to the bacterial ribosomal protein bL20 family.

The protein resides in the plastid. The protein localises to the chloroplast. Its function is as follows. Binds directly to 23S ribosomal RNA and is necessary for the in vitro assembly process of the 50S ribosomal subunit. It is not involved in the protein synthesizing functions of that subunit. In Arabis hirsuta (Hairy rock-cress), this protein is Large ribosomal subunit protein bL20c.